The chain runs to 447 residues: Trigger factor (447 aa).

The PPIase FKBP-type domain maps to 159 to 244; it reads GDMLLMQVES…VREIKEEKLP (86 aa).

It belongs to the FKBP-type PPIase family. Tig subfamily.

It localises to the cytoplasm. The enzyme catalyses [protein]-peptidylproline (omega=180) = [protein]-peptidylproline (omega=0). In terms of biological role, involved in protein export. Acts as a chaperone by maintaining the newly synthesized protein in an open conformation. Functions as a peptidyl-prolyl cis-trans isomerase. This Dehalococcoides mccartyi (strain CBDB1) protein is Trigger factor.